A 116-amino-acid polypeptide reads, in one-letter code: Ribosome-binding factor A (116 aa).

It belongs to the RbfA family. As to quaternary structure, monomer. Binds 30S ribosomal subunits, but not 50S ribosomal subunits or 70S ribosomes.

The protein resides in the cytoplasm. One of several proteins that assist in the late maturation steps of the functional core of the 30S ribosomal subunit. Associates with free 30S ribosomal subunits (but not with 30S subunits that are part of 70S ribosomes or polysomes). Required for efficient processing of 16S rRNA. May interact with the 5'-terminal helix region of 16S rRNA. In Clostridium perfringens (strain 13 / Type A), this protein is Ribosome-binding factor A.